An 815-amino-acid chain; its full sequence is Probable AMP deaminase (815 aa).

A helical membrane pass occupies residues 5–27 (YALHLAVATLLGASFAAASAYYM). 2 disordered regions span residues 53 to 116 (LLDA…PVPT) and 144 to 173 (LLTN…STNM). A compositionally biased stretch (low complexity) spans 105 to 116 (VRPTTPRSPVPT). The segment covering 159-173 (ASQNGDTKPVPSTNM) has biased composition (polar residues). 2 residues coordinate Zn(2+): histidine 367 and histidine 369. Substrate-binding positions include histidine 369 and 438–443 (KFNLKY). Histidine 635 contacts Zn(2+). Glutamate 638 lines the substrate pocket. Residue histidine 657 is the Proton acceptor of the active site. Aspartate 712 is a binding site for Zn(2+). 713-716 (DPLQ) is a binding site for substrate.

It belongs to the metallo-dependent hydrolases superfamily. Adenosine and AMP deaminases family. Homodimer. It depends on Zn(2+) as a cofactor.

The protein localises to the membrane. The enzyme catalyses AMP + H2O + H(+) = IMP + NH4(+). Its pathway is purine metabolism; IMP biosynthesis via salvage pathway; IMP from AMP: step 1/1. AMP deaminase plays a critical role in energy metabolism. This Oryza sativa subsp. japonica (Rice) protein is Probable AMP deaminase (AMPD).